The following is a 267-amino-acid chain: Thiamine pyrophosphokinase 3 (267 aa).

This sequence belongs to the thiamine pyrophosphokinase family.

It localises to the cytoplasm. It is found in the cytosol. It catalyses the reaction thiamine + ATP = thiamine diphosphate + AMP + H(+). The protein operates within cofactor biosynthesis; thiamine diphosphate biosynthesis; thiamine diphosphate from thiamine: step 1/1. Its function is as follows. Catalyzes the phosphorylation of thiamine to thiamine pyrophosphate (TPP). TPP is an active cofactor for enzymes involved in glycolysis and energy production. Plant leaves require high levels of TPP for photosynthesis and carbohydrate metabolism. The protein is Thiamine pyrophosphokinase 3 (TPK3) of Oryza sativa subsp. japonica (Rice).